The chain runs to 338 residues: Glycerol-3-phosphate dehydrogenase [NAD(P)+] (338 aa).

NADPH-binding residues include W11, R30, and K107. Residues K107, G140, and S142 each coordinate sn-glycerol 3-phosphate. An NADPH-binding site is contributed by A144. Sn-glycerol 3-phosphate contacts are provided by K195, D248, S258, R259, and N260. K195 acts as the Proton acceptor in catalysis. R259 is an NADPH binding site. NADPH contacts are provided by V283 and E285.

Belongs to the NAD-dependent glycerol-3-phosphate dehydrogenase family.

Its subcellular location is the cytoplasm. It carries out the reaction sn-glycerol 3-phosphate + NAD(+) = dihydroxyacetone phosphate + NADH + H(+). The catalysed reaction is sn-glycerol 3-phosphate + NADP(+) = dihydroxyacetone phosphate + NADPH + H(+). Its pathway is membrane lipid metabolism; glycerophospholipid metabolism. In terms of biological role, catalyzes the reduction of the glycolytic intermediate dihydroxyacetone phosphate (DHAP) to sn-glycerol 3-phosphate (G3P), the key precursor for phospholipid synthesis. This is Glycerol-3-phosphate dehydrogenase [NAD(P)+] from Ralstonia nicotianae (strain ATCC BAA-1114 / GMI1000) (Ralstonia solanacearum).